Consider the following 247-residue polypeptide: MAGHSKWSQIKRTKAVVDAKRGAVFTRIGREITVAARQGADPDGNFQLRTAIAKAKAAGVPAGNIERAIAKGSGQGGEAIKLESIRYEGYGPGGVAVLVEALSDNRNRTAAELRLAFSKHGGNLGESGCVSYLFQHRSEVRIEADAEREEALLESLLSLEADGYELGDDGQALVHGPYEVLESLQNGLRQQSWQVQEWTHAWHPLTQVVPQDPDTTRQCLKLLEALEDLDDVNSISTNLEIDDAFVP.

It belongs to the TACO1 family.

The protein resides in the cytoplasm. The protein is Probable transcriptional regulatory protein SynWH7803_1972 of Synechococcus sp. (strain WH7803).